The sequence spans 452 residues: COP9 signalosome complex subunit 11 (452 aa).

The region spanning 205–374 (FYIEDPKTMM…ISYSKRSIVD (170 aa)) is the PCI domain.

As to quaternary structure, component of a COP9 signalosome-like (CSN) complex.

It localises to the cytoplasm. The protein localises to the nucleus. Component of the COP9 signalosome (CSN) complex that acts as an regulator of the ubiquitin (Ubl) conjugation pathway by mediating the deneddylation of the cullin subunit of SCF-type E3 ubiquitin-protein ligase complexes The CSN complex is involved in the regulation of the mating pheromone response. PCI8 may also be involved in transcriptional and translational control. This Candida glabrata (strain ATCC 2001 / BCRC 20586 / JCM 3761 / NBRC 0622 / NRRL Y-65 / CBS 138) (Yeast) protein is COP9 signalosome complex subunit 11 (PCI8).